A 291-amino-acid chain; its full sequence is HTH-type transcriptional activator AmpR (291 aa).

The HTH lysR-type domain occupies 6 to 63 (IPLNSLRAFEAAARHLSFTRAAIELNVTHSAISQHVKSLEQQLNCQLFVRGSRGLMLT). A DNA-binding region (H-T-H motif) is located at residues 23-42 (FTRAAIELNVTHSAISQHVK).

This sequence belongs to the LysR transcriptional regulatory family.

Its subcellular location is the cytoplasm. Functionally, regulates the expression of the beta-lactamase gene. Represses cephalosporinase (AmpC) in the presence of beta-lactams and induces it in the absence of them. In Citrobacter freundii, this protein is HTH-type transcriptional activator AmpR (ampR).